The chain runs to 178 residues: Fatty-acid and retinol-binding protein 1 (178 aa).

Residues 1–16 form the signal peptide; sequence MYHRLILLALVGTTMA. Coiled coils occupy residues 67–89 and 130–153; these read DAAL…ELRN and KQAA…ELKV.

The protein belongs to the fatty-acid and retinol-binding protein (FARBP) family. Not glycosylated.

Its subcellular location is the secreted. Binds retinol and different fatty acids. The polypeptide is Fatty-acid and retinol-binding protein 1 (Brugia pahangi (Filarial nematode worm)).